We begin with the raw amino-acid sequence, 244 residues long: Orotidine 5'-phosphate decarboxylase (244 aa).

Substrate is bound by residues aspartate 18, lysine 43, 73-82 (DLKLADIGYI), serine 130, 182-192 (PGVGAQGGKPG), glycine 206, and arginine 207. The active-site Proton donor is lysine 75.

It belongs to the OMP decarboxylase family. Type 1 subfamily. Homodimer.

It catalyses the reaction orotidine 5'-phosphate + H(+) = UMP + CO2. Its pathway is pyrimidine metabolism; UMP biosynthesis via de novo pathway; UMP from orotate: step 2/2. In terms of biological role, catalyzes the decarboxylation of orotidine 5'-monophosphate (OMP) to uridine 5'-monophosphate (UMP). The protein is Orotidine 5'-phosphate decarboxylase of Aeropyrum pernix (strain ATCC 700893 / DSM 11879 / JCM 9820 / NBRC 100138 / K1).